Here is a 176-residue protein sequence, read N- to C-terminus: Protein SPMIP1 (176 aa).

A disordered region spans residues 55–80 (TLHPKAPLSPPPAPKSAPSKVPSPVP). Over residues 61 to 80 (PLSPPPAPKSAPSKVPSPVP) the composition is skewed to pro residues.

This chain is Protein SPMIP1, found in Homo sapiens (Human).